The primary structure comprises 1500 residues: Myosin-8 (1500 aa).

A Myosin N-terminal SH3-like domain is found at 8–57 (AVGSHVWVEDPDEAWLDGEVVEINGDQIKVLCASGKQVVVKDSNIYPKDV). The Myosin motor domain occupies 62 to 732 (SGVEDMTRLA…QMADLDTRRT (671 aa)). ATP-binding positions include 156-163 (GESGAGKT) and 210-218 (NNNSSRFGK). Actin-binding regions lie at residues 496–530 (LIEKKPGGIIALLDEACMFPRSTHETFAQKLYQTY), 532–555 (NHKRFTKPKLARSDFTICHYAGDV), 590–613 (FPPVSDDSKQSKFSSIGTRFKQQL), and 613–635 (LVSLLEILNTTEPHYIRCIKPNN). 6 IQ domains span residues 735-764 (LGRSASIIQRKVRSYLAQKTFIQLRISATQ), 758-787 (LRISATQIQAVCRGYLARSIYEGMRREAAA), 783-812 (REAAALKIQRDLRKFLARKAYTELFSATIL), 806-835 (LFSATILIQAGMRGMVSRKELCLRRQTKAA), 831-860 (QTKAATIIQTRCRVYLARLHYRKLKKAAIT), and 854-883 (LKKAAITTQCAWRGKVARKELKNLKMAARE). Residues 884–1049 (TGALQEAKNK…TEKQIMLQQT (166 aa)) are a coiled coil. The Dilute domain maps to 1146-1447 (DRLIEMIGSA…ISSMRALMTE (302 aa)).

It belongs to the TRAFAC class myosin-kinesin ATPase superfamily. Myosin family. Plant myosin class XI subfamily. As to quaternary structure, homodimer.

It localises to the cytoplasm. In terms of biological role, myosin heavy chain that is required for the cell cycle-regulated transport of various organelles and proteins for their segregation. Functions by binding with its tail domain to receptor proteins on organelles and exerting force with its N-terminal motor domain against actin filaments, thereby transporting its cargo along polarized actin cables. This chain is Myosin-8 (XI-B), found in Arabidopsis thaliana (Mouse-ear cress).